A 536-amino-acid polypeptide reads, in one-letter code: UDP-N-acetylmuramate--L-alanine ligase (536 aa).

133–139 (GSSGKTT) provides a ligand contact to ATP.

The protein belongs to the MurCDEF family.

Its subcellular location is the cytoplasm. It carries out the reaction UDP-N-acetyl-alpha-D-muramate + L-alanine + ATP = UDP-N-acetyl-alpha-D-muramoyl-L-alanine + ADP + phosphate + H(+). Its pathway is cell wall biogenesis; peptidoglycan biosynthesis. In terms of biological role, cell wall formation. This Wolbachia sp. subsp. Brugia malayi (strain TRS) protein is UDP-N-acetylmuramate--L-alanine ligase.